Here is a 693-residue protein sequence, read N- to C-terminus: Elongation factor G (693 aa).

One can recognise a tr-type G domain in the interval 8 to 282 (KNTRNIGIMA…AAIEYLPSPL (275 aa)). GTP is bound by residues 17 to 24 (AHIDAGKT), 81 to 85 (DTPGH), and 135 to 138 (NKMD).

This sequence belongs to the TRAFAC class translation factor GTPase superfamily. Classic translation factor GTPase family. EF-G/EF-2 subfamily.

The protein localises to the cytoplasm. In terms of biological role, catalyzes the GTP-dependent ribosomal translocation step during translation elongation. During this step, the ribosome changes from the pre-translocational (PRE) to the post-translocational (POST) state as the newly formed A-site-bound peptidyl-tRNA and P-site-bound deacylated tRNA move to the P and E sites, respectively. Catalyzes the coordinated movement of the two tRNA molecules, the mRNA and conformational changes in the ribosome. The protein is Elongation factor G of Macrococcus caseolyticus (strain JCSC5402) (Macrococcoides caseolyticum).